The chain runs to 344 residues: Dihydroorotase (344 aa).

Residues His13 and His15 each contribute to the Zn(2+) site. Substrate contacts are provided by residues 15–17 (HLR) and Asn41. Zn(2+)-binding residues include Lys98, His135, and His173. Position 98 is an N6-carboxylysine (Lys98). Residue His135 participates in substrate binding. Leu218 lines the substrate pocket. Asp247 serves as a coordination point for Zn(2+). Residue Asp247 is part of the active site. His251 and Ala263 together coordinate substrate.

It belongs to the metallo-dependent hydrolases superfamily. DHOase family. Class II DHOase subfamily. In terms of assembly, homodimer. Requires Zn(2+) as cofactor.

The enzyme catalyses (S)-dihydroorotate + H2O = N-carbamoyl-L-aspartate + H(+). Its pathway is pyrimidine metabolism; UMP biosynthesis via de novo pathway; (S)-dihydroorotate from bicarbonate: step 3/3. Functionally, catalyzes the reversible cyclization of carbamoyl aspartate to dihydroorotate. The chain is Dihydroorotase from Neisseria meningitidis serogroup C / serotype 2a (strain ATCC 700532 / DSM 15464 / FAM18).